The following is a 233-amino-acid chain: tRNA (guanine-N(7)-)-methyltransferase (233 aa).

A disordered region spans residues 1–36 (MSEFDPNPPRRNFYGRRHGKTLRQSQKGYLSEDLGS). S-adenosyl-L-methionine contacts are provided by Glu-68, Glu-93, Asp-120, and Asp-142. The active site involves Asp-142. Substrate contacts are provided by residues Lys-146, Asp-178, and 211-214 (TRYE).

Belongs to the class I-like SAM-binding methyltransferase superfamily. TrmB family.

The enzyme catalyses guanosine(46) in tRNA + S-adenosyl-L-methionine = N(7)-methylguanosine(46) in tRNA + S-adenosyl-L-homocysteine. It participates in tRNA modification; N(7)-methylguanine-tRNA biosynthesis. Functionally, catalyzes the formation of N(7)-methylguanine at position 46 (m7G46) in tRNA. The chain is tRNA (guanine-N(7)-)-methyltransferase from Paracoccus denitrificans (strain Pd 1222).